The sequence spans 487 residues: N-succinylglutamate 5-semialdehyde dehydrogenase (487 aa).

221–226 (GSSRTG) contacts NAD(+). Active-site residues include E244 and C278.

This sequence belongs to the aldehyde dehydrogenase family. AstD subfamily.

It carries out the reaction N-succinyl-L-glutamate 5-semialdehyde + NAD(+) + H2O = N-succinyl-L-glutamate + NADH + 2 H(+). It functions in the pathway amino-acid degradation; L-arginine degradation via AST pathway; L-glutamate and succinate from L-arginine: step 4/5. In terms of biological role, catalyzes the NAD-dependent reduction of succinylglutamate semialdehyde into succinylglutamate. This is N-succinylglutamate 5-semialdehyde dehydrogenase from Pseudomonas entomophila (strain L48).